Here is a 31-residue protein sequence, read N- to C-terminus: Photosystem II reaction center protein T (31 aa).

The helical transmembrane segment at 3–23 (SFAYVLILTFAIATLFFAIAF) threads the bilayer.

Belongs to the PsbT family. PSII is composed of 1 copy each of membrane proteins PsbA, PsbB, PsbC, PsbD, PsbE, PsbF, PsbH, PsbI, PsbJ, PsbK, PsbL, PsbM, PsbT, PsbX, PsbY, PsbZ, Psb30/Ycf12, peripheral proteins PsbO, CyanoQ (PsbQ), PsbU, PsbV and a large number of cofactors. It forms dimeric complexes.

The protein localises to the cellular thylakoid membrane. Its function is as follows. Found at the monomer-monomer interface of the photosystem II (PS II) dimer, plays a role in assembly and dimerization of PSII. PSII is a light-driven water plastoquinone oxidoreductase, using light energy to abstract electrons from H(2)O, generating a proton gradient subsequently used for ATP formation. This Synechococcus sp. (strain CC9902) protein is Photosystem II reaction center protein T.